The sequence spans 217 residues: Uracil-DNA glycosylase (217 aa).

The active-site Proton acceptor is the aspartate 62.

This sequence belongs to the uracil-DNA glycosylase (UDG) superfamily. UNG family.

It is found in the cytoplasm. The enzyme catalyses Hydrolyzes single-stranded DNA or mismatched double-stranded DNA and polynucleotides, releasing free uracil.. Its function is as follows. Excises uracil residues from the DNA which can arise as a result of misincorporation of dUMP residues by DNA polymerase or due to deamination of cytosine. This is Uracil-DNA glycosylase from Streptococcus pyogenes serotype M49 (strain NZ131).